The chain runs to 242 residues: Probable transcriptional regulatory protein Bmul_0984/BMULJ_02280 (242 aa).

This sequence belongs to the TACO1 family.

The protein resides in the cytoplasm. This is Probable transcriptional regulatory protein Bmul_0984/BMULJ_02280 from Burkholderia multivorans (strain ATCC 17616 / 249).